Here is a 136-residue protein sequence, read N- to C-terminus: Glutamyl-tRNA(Gln) amidotransferase subunit C, mitochondrial (136 aa).

This sequence belongs to the GatC family. Subunit of the heterotrimeric GatCAB amidotransferase (AdT) complex, composed of A (QRSL1), B (GATB) and C (GATC) subunits.

It is found in the mitochondrion. The catalysed reaction is L-glutamyl-tRNA(Gln) + L-glutamine + ATP + H2O = L-glutaminyl-tRNA(Gln) + L-glutamate + ADP + phosphate + H(+). Functionally, allows the formation of correctly charged Gln-tRNA(Gln) through the transamidation of misacylated Glu-tRNA(Gln) in the mitochondria. The reaction takes place in the presence of glutamine and ATP through an activated gamma-phospho-Glu-tRNA(Gln). The protein is Glutamyl-tRNA(Gln) amidotransferase subunit C, mitochondrial of Homo sapiens (Human).